The chain runs to 71 residues: Sperm-associated antigen 11A (71 aa).

An N-terminal signal peptide occupies residues 1–19 (MIPRLLPFFASLLFAALLF). 3 cysteine pairs are disulfide-bonded: cysteine 32-cysteine 61, cysteine 39-cysteine 54, and cysteine 44-cysteine 62.

Belongs to the beta-defensin family.

It is found in the secreted. Has antimicrobial activity against E.coli. Plays a role in the defense response in the male reproductive tract, contributing to sperm maturation, storage and protection. The protein is Sperm-associated antigen 11A of Mus musculus (Mouse).